An 874-amino-acid polypeptide reads, in one-letter code: Alanine--tRNA ligase (874 aa).

Residues His-563, His-567, Cys-664, and His-668 each contribute to the Zn(2+) site.

It belongs to the class-II aminoacyl-tRNA synthetase family. Zn(2+) is required as a cofactor.

The protein resides in the cytoplasm. The catalysed reaction is tRNA(Ala) + L-alanine + ATP = L-alanyl-tRNA(Ala) + AMP + diphosphate. Catalyzes the attachment of alanine to tRNA(Ala) in a two-step reaction: alanine is first activated by ATP to form Ala-AMP and then transferred to the acceptor end of tRNA(Ala). Also edits incorrectly charged Ser-tRNA(Ala) and Gly-tRNA(Ala) via its editing domain. This chain is Alanine--tRNA ligase, found in Methylobacillus flagellatus (strain ATCC 51484 / DSM 6875 / VKM B-1610 / KT).